Reading from the N-terminus, the 181-residue chain is ADP-ribosylation factor 1 (181 aa).

The N-myristoyl glycine moiety is linked to residue Gly2. Residues 24–31, 67–71, and 126–129 contribute to the GTP site; these read GLDAAGKT, DVGGQ, and NKQD.

Belongs to the small GTPase superfamily. Arf family. In terms of tissue distribution, seedling shoots.

The protein resides in the golgi apparatus. The catalysed reaction is GTP + H2O = GDP + phosphate + H(+). In terms of biological role, GTP-binding protein involved in protein trafficking; may modulate vesicle budding and uncoating within the Golgi apparatus. The polypeptide is ADP-ribosylation factor 1 (Oryza sativa subsp. japonica (Rice)).